Reading from the N-terminus, the 406-residue chain is Serine/threonine transporter SstT (406 aa).

Transmembrane regions (helical) follow at residues 15–35 (LVIQ…VSPS), 47–67 (FVGA…AASI), 81–101 (IIVM…VLSF), 140–160 (ALMS…GLAL), 191–211 (FGIF…ALAG), 215–235 (LLVV…PAMV), 289–309 (IPLG…TLTL), 315–335 (MGIE…AVSA), and 362–382 (IAMQ…SAET).

It belongs to the dicarboxylate/amino acid:cation symporter (DAACS) (TC 2.A.23) family.

It localises to the cell inner membrane. It catalyses the reaction L-serine(in) + Na(+)(in) = L-serine(out) + Na(+)(out). It carries out the reaction L-threonine(in) + Na(+)(in) = L-threonine(out) + Na(+)(out). In terms of biological role, involved in the import of serine and threonine into the cell, with the concomitant import of sodium (symport system). This is Serine/threonine transporter SstT from Vibrio vulnificus (strain YJ016).